We begin with the raw amino-acid sequence, 340 residues long: Tetrathionate reductase subunit C (340 aa).

9 helical membrane-spanning segments follow: residues 19–39, 57–77, 94–114, 128–148, 164–184, 195–215, 236–256, 266–286, and 306–326; these read WLPW…AALF, ALLI…ADLH, WMPW…LWFL, VTKW…IYTG, AFPV…MIVA, ILWG…MWVS, YYAV…SLAL, VLLV…LLIQ, and TDGW…LIII.

Belongs to the NrfD family. Probably composed of three subunits: TtrA, TtrB and TtrC.

The protein resides in the cell inner membrane. Functionally, part of a membrane-bound tetrathionate reductase that catalyzes the reduction of tetrathionate to thiosulfate. TtrC probably anchors TtrA and TtrB to the periplasmic face of the cytoplasmic membrane. May transfer electrons from membrane quinol to TtrB. During mice infection, the ability to use tetrathionate as an electron acceptor is a growth advantage for S.typhimurium over the competing microbiota in the lumen of the inflamed gut. This chain is Tetrathionate reductase subunit C (ttrC), found in Salmonella typhimurium (strain LT2 / SGSC1412 / ATCC 700720).